The chain runs to 311 residues: Probable manganese-dependent inorganic pyrophosphatase (311 aa).

Positions 9, 13, 15, 75, 97, and 149 each coordinate Mn(2+).

The protein belongs to the PPase class C family. Mn(2+) serves as cofactor.

It localises to the cytoplasm. The catalysed reaction is diphosphate + H2O = 2 phosphate + H(+). This Lactobacillus helveticus (strain DPC 4571) protein is Probable manganese-dependent inorganic pyrophosphatase.